Consider the following 213-residue polypeptide: Peptidyl-tRNA hydrolase (213 aa).

Tyr26 contributes to the tRNA binding site. His31 serves as the catalytic Proton acceptor. The tRNA site is built by Tyr78, Asn80, and Asn126.

The protein belongs to the PTH family. Monomer.

It localises to the cytoplasm. It catalyses the reaction an N-acyl-L-alpha-aminoacyl-tRNA + H2O = an N-acyl-L-amino acid + a tRNA + H(+). Its function is as follows. Hydrolyzes ribosome-free peptidyl-tRNAs (with 1 or more amino acids incorporated), which drop off the ribosome during protein synthesis, or as a result of ribosome stalling. Functionally, catalyzes the release of premature peptidyl moieties from peptidyl-tRNA molecules trapped in stalled 50S ribosomal subunits, and thus maintains levels of free tRNAs and 50S ribosomes. The chain is Peptidyl-tRNA hydrolase from Nostoc punctiforme (strain ATCC 29133 / PCC 73102).